Consider the following 129-residue polypeptide: MGRRILNDALRTIVNAEKRGKASVELKPVSTVMSSFLKIMKEKGYIKNFQVHDPHRVGRITVDLQGRVNDCKALTYRQDVKANEIGQYTERTLPTRQWGYIVITTPDGILDHEEAIKRNVGGQVLGFFH.

Belongs to the universal ribosomal protein uS8 family. As to quaternary structure, component of the mitochondrial ribosome small subunit.

The protein resides in the mitochondrion. The protein is Small ribosomal subunit protein uS8mz (RPS15AB) of Arabidopsis thaliana (Mouse-ear cress).